A 435-amino-acid chain; its full sequence is Proline--tRNA ligase (435 aa).

Belongs to the class-II aminoacyl-tRNA synthetase family. ProS type 2 subfamily. As to quaternary structure, homodimer.

Its subcellular location is the cytoplasm. It catalyses the reaction tRNA(Pro) + L-proline + ATP = L-prolyl-tRNA(Pro) + AMP + diphosphate. Its function is as follows. Catalyzes the attachment of proline to tRNA(Pro) in a two-step reaction: proline is first activated by ATP to form Pro-AMP and then transferred to the acceptor end of tRNA(Pro). In Rhodospirillum rubrum (strain ATCC 11170 / ATH 1.1.1 / DSM 467 / LMG 4362 / NCIMB 8255 / S1), this protein is Proline--tRNA ligase.